The chain runs to 132 residues: Small ribosomal subunit protein uS8 (132 aa).

Belongs to the universal ribosomal protein uS8 family. In terms of assembly, part of the 30S ribosomal subunit. Contacts proteins S5 and S12.

In terms of biological role, one of the primary rRNA binding proteins, it binds directly to 16S rRNA central domain where it helps coordinate assembly of the platform of the 30S subunit. In Bacillus mycoides (strain KBAB4) (Bacillus weihenstephanensis), this protein is Small ribosomal subunit protein uS8.